The sequence spans 504 residues: Cytochrome P450 6B2 (504 aa).

C445 provides a ligand contact to heme.

Belongs to the cytochrome P450 family. It depends on heme as a cofactor.

The protein localises to the endoplasmic reticulum membrane. It is found in the microsome membrane. The enzyme catalyses an organic molecule + reduced [NADPH--hemoprotein reductase] + O2 = an alcohol + oxidized [NADPH--hemoprotein reductase] + H2O + H(+). The chain is Cytochrome P450 6B2 (CYP6B2) from Helicoverpa armigera (Cotton bollworm).